The primary structure comprises 965 residues: Collagen alpha-1(I) chain (965 aa).

Residues Gly-1–Pro-965 form a disordered region. Pro-18, Pro-21, Pro-23, Pro-32, Pro-35, Pro-38, Pro-53, Pro-68, Pro-74, Pro-83, and Pro-89 each carry 4-hydroxyproline. Low complexity predominate over residues Gln-26–Met-44. Over residues Asn-56–Glu-70 the composition is skewed to basic and acidic residues. Lys-92 is modified (5-hydroxylysine; alternate). Lys-92 carries an O-linked (Gal...) hydroxylysine; alternate glycan. At Ser-98 the chain carries Phosphoserine. Low complexity predominate over residues Asp-106 to Asn-122. A 4-hydroxyproline mark is found at Pro-116, Pro-119, Pro-125, Pro-139, Pro-160, Pro-169, Pro-172, Pro-199, Pro-202, Pro-214, Pro-220, Pro-229, Pro-235, Pro-238, and Pro-253. Over residues Pro-139–Ala-157 the composition is skewed to low complexity. Pro residues predominate over residues Pro-159 to Phe-171. Over residues Ala-205–Ser-244 the composition is skewed to low complexity. Lys-256 is subject to 5-hydroxylysine. Residues Pro-262, Pro-265, Pro-269, Pro-278, Pro-293, Pro-299, Pro-308, and Pro-314 each carry the 4-hydroxyproline modification. Residues Gly-303–Gly-312 show a composition bias toward gly residues. At Lys-323 the chain carries 5-hydroxylysine. 4-hydroxyproline is present on residues Pro-326, Pro-332, Pro-338, Pro-347, Pro-350, Pro-359, Pro-368, Pro-374, Pro-386, Pro-395, Pro-404, Pro-407, Pro-425, Pro-442, Pro-448, Pro-454, Pro-460, Pro-466, Pro-472, Pro-484, Pro-493, Pro-506, Pro-512, and Pro-521. Positions Lys-341–Arg-367 are enriched in low complexity. The span at Ala-376–Pro-395 shows a compositional bias: low complexity. Positions Pro-454–Gln-463 are enriched in low complexity. Lys-533 is subject to 5-hydroxylysine. 4-hydroxyproline is present on residues Pro-539, Pro-554, and Pro-560. A compositionally biased stretch (low complexity) spans Ser-566–Ala-580. Position 569 is a phosphoserine (Ser-569). 4-hydroxyproline is present on residues Pro-581, Pro-587, Pro-590, Pro-599, Pro-605, Pro-623, Pro-632, and Pro-641. Low complexity predominate over residues Ala-593–Ala-620. Lys-644 is subject to 5-hydroxylysine. Low complexity predominate over residues Ser-649–Val-665. Residues Pro-653 and Pro-659 each carry the 4-hydroxyproline modification. Pro-667 carries the post-translational modification 3-hydroxyproline. A 4-hydroxyproline mark is found at Pro-668, Pro-677, Pro-680, Pro-716, Pro-725, Pro-743, Pro-752, Pro-755, Pro-761, Pro-776, Pro-782, Pro-788, Pro-796, and Pro-802. Positions Ser-710–Pro-725 are enriched in low complexity. Residues Pro-775–Ala-785 show a composition bias toward pro residues. Residue Lys-811 is modified to 5-hydroxylysine. 4-hydroxyproline occurs at positions 819, 822, and 825. Residues Pro-819–Val-831 show a composition bias toward pro residues. The segment covering Ala-851–Pro-865 has biased composition (low complexity). Over residues Arg-866–Ile-880 the composition is skewed to basic and acidic residues. A 5-hydroxylysine modification is found at Lys-869. The residue at position 881 (Lys-881) is a 5-hydroxylysine; alternate. A glycan (O-linked (Gal...) hydroxylysine; alternate) is linked at Lys-881. A 4-hydroxyproline mark is found at Pro-896, Pro-899, Pro-917, and Pro-932. Low complexity predominate over residues Pro-899–Pro-932. Pro-937 carries the post-translational modification 3-hydroxyproline. At Pro-938 the chain carries 4-hydroxyproline. The segment covering Val-950–Pro-965 has biased composition (pro residues). Position 952 is a 3-hydroxyproline (Pro-952). Position 953 is a 4-hydroxyproline (Pro-953). The residue at position 955 (Pro-955) is a 3-hydroxyproline. Position 956 is a 4-hydroxyproline (Pro-956). At Pro-958 the chain carries 3-hydroxyproline. Residues Pro-959, Pro-962, and Pro-965 each carry the 4-hydroxyproline modification.

It belongs to the fibrillar collagen family. As to quaternary structure, trimers of one alpha 2(I) and two alpha 1(I) chains. In terms of processing, contains mostly 4-hydroxyproline. Proline residues at the third position of the tripeptide repeating unit (G-X-Y) are hydroxylated in some or all of the chains. Post-translationally, contains 3-hydroxyproline at a few sites. This modification occurs on the first proline residue in the sequence motif Gly-Pro-Hyp, where Hyp is 4-hydroxyproline. Lysine residues at the third position of the tripeptide repeating unit (G-X-Y) are 5-hydroxylated in some or all of the chains. In terms of processing, O-glycosylated on hydroxylated lysine residues. The O-linked glycan consists of a Glc-Gal disaccharide. As to expression, expressed in bones.

The protein resides in the secreted. Its subcellular location is the extracellular space. It localises to the extracellular matrix. In terms of biological role, type I collagen is a member of group I collagen (fibrillar forming collagen). The protein is Collagen alpha-1(I) chain of Acratocnus sp. (strain SLP-2019) (Ground sloth).